A 121-amino-acid polypeptide reads, in one-letter code: Putative SNURF-like protein (121 aa).

Belongs to the SNURF family.

The polypeptide is Putative SNURF-like protein (SNURFL) (Homo sapiens (Human)).